Consider the following 528-residue polypeptide: Peptide chain release factor 3 (528 aa).

The 269-residue stretch at 11-279 folds into the tr-type G domain; it reads SRRRTFAIIS…GLVDWAPSPQ (269 aa). GTP contacts are provided by residues 20 to 27, 88 to 92, and 142 to 145; these read SHPDAGKT, DTPGH, and NKLD.

The protein belongs to the TRAFAC class translation factor GTPase superfamily. Classic translation factor GTPase family. PrfC subfamily.

The protein localises to the cytoplasm. Its function is as follows. Increases the formation of ribosomal termination complexes and stimulates activities of RF-1 and RF-2. It binds guanine nucleotides and has strong preference for UGA stop codons. It may interact directly with the ribosome. The stimulation of RF-1 and RF-2 is significantly reduced by GTP and GDP, but not by GMP. The polypeptide is Peptide chain release factor 3 (Pseudoalteromonas atlantica (strain T6c / ATCC BAA-1087)).